The sequence spans 655 residues: uncharacterized protein (655 aa).

The PE-PPE domain maps to 245–469 (PGVIAQALFT…NLKVIVNLGY (225 aa)).

It belongs to the mycobacterial PPE family.

This is an uncharacterized protein from Mycobacterium tuberculosis (strain ATCC 25618 / H37Rv).